The following is a 213-amino-acid chain: dITP/XTP pyrophosphatase (213 aa).

7–12 is a binding site for substrate; sequence TSNLDK. The active-site Proton acceptor is Asp74. Asp74 contributes to the Mg(2+) binding site. Substrate is bound by residues Ser75, 165–168, Lys188, and 193–194; these read FGYD and HR.

Belongs to the HAM1 NTPase family. In terms of assembly, homodimer. Mg(2+) is required as a cofactor.

It catalyses the reaction XTP + H2O = XMP + diphosphate + H(+). The catalysed reaction is dITP + H2O = dIMP + diphosphate + H(+). It carries out the reaction ITP + H2O = IMP + diphosphate + H(+). Pyrophosphatase that catalyzes the hydrolysis of nucleoside triphosphates to their monophosphate derivatives, with a high preference for the non-canonical purine nucleotides XTP (xanthosine triphosphate), dITP (deoxyinosine triphosphate) and ITP. Seems to function as a house-cleaning enzyme that removes non-canonical purine nucleotides from the nucleotide pool, thus preventing their incorporation into DNA/RNA and avoiding chromosomal lesions. This Campylobacter concisus (strain 13826) protein is dITP/XTP pyrophosphatase.